The primary structure comprises 207 residues: Urease accessory protein UreG (207 aa).

16 to 23 lines the GTP pocket; sequence GPVGSGKT.

This sequence belongs to the SIMIBI class G3E GTPase family. UreG subfamily. Homodimer. UreD, UreF and UreG form a complex that acts as a GTP-hydrolysis-dependent molecular chaperone, activating the urease apoprotein by helping to assemble the nickel containing metallocenter of UreC. The UreE protein probably delivers the nickel.

Its subcellular location is the cytoplasm. Functionally, facilitates the functional incorporation of the urease nickel metallocenter. This process requires GTP hydrolysis, probably effectuated by UreG. The polypeptide is Urease accessory protein UreG (Blochmanniella pennsylvanica (strain BPEN)).